Reading from the N-terminus, the 114-residue chain is MARVTVEDCVDKVPNRFDLVLLAAQRAREISGGAEMTIDRDRDKNPVVALREIAEQTIKPKDLQEAVVTNLQKILPDDDDEFDEVGSLSQSAEALRITASAPTRSTSIGADFDG.

The protein belongs to the RNA polymerase subunit omega family. As to quaternary structure, the RNAP catalytic core consists of 2 alpha, 1 beta, 1 beta' and 1 omega subunit. When a sigma factor is associated with the core the holoenzyme is formed, which can initiate transcription.

The catalysed reaction is RNA(n) + a ribonucleoside 5'-triphosphate = RNA(n+1) + diphosphate. Functionally, promotes RNA polymerase assembly. Latches the N- and C-terminal regions of the beta' subunit thereby facilitating its interaction with the beta and alpha subunits. This Erythrobacter litoralis (strain HTCC2594) protein is DNA-directed RNA polymerase subunit omega.